Here is an 804-residue protein sequence, read N- to C-terminus: Probable phosphoketolase (804 aa).

This sequence belongs to the XFP family. Requires thiamine diphosphate as cofactor.

In Mycobacterium avium (strain 104), this protein is Probable phosphoketolase.